The primary structure comprises 414 residues: Tryptophan synthase beta chain (414 aa).

The segment at 1-28 (MVSTISRQDQNNNDDLNQPSKEGRFGKY) is disordered. Low complexity predominate over residues 8 to 18 (QDQNNNDDLNQ). Lysine 108 is subject to N6-(pyridoxal phosphate)lysine.

This sequence belongs to the TrpB family. In terms of assembly, tetramer of two alpha and two beta chains. The cofactor is pyridoxal 5'-phosphate.

The enzyme catalyses (1S,2R)-1-C-(indol-3-yl)glycerol 3-phosphate + L-serine = D-glyceraldehyde 3-phosphate + L-tryptophan + H2O. Its pathway is amino-acid biosynthesis; L-tryptophan biosynthesis; L-tryptophan from chorismate: step 5/5. In terms of biological role, the beta subunit is responsible for the synthesis of L-tryptophan from indole and L-serine. This is Tryptophan synthase beta chain from Prochlorococcus marinus subsp. pastoris (strain CCMP1986 / NIES-2087 / MED4).